We begin with the raw amino-acid sequence, 249 residues long: Triosephosphate isomerase (249 aa).

9–11 (NWK) provides a ligand contact to substrate. Histidine 94 acts as the Electrophile in catalysis. Glutamate 166 (proton acceptor) is an active-site residue. Substrate contacts are provided by residues glycine 172, serine 211, and 232–233 (GG).

This sequence belongs to the triosephosphate isomerase family. As to quaternary structure, homodimer.

The protein resides in the cytoplasm. The catalysed reaction is D-glyceraldehyde 3-phosphate = dihydroxyacetone phosphate. Its pathway is carbohydrate biosynthesis; gluconeogenesis. It participates in carbohydrate degradation; glycolysis; D-glyceraldehyde 3-phosphate from glycerone phosphate: step 1/1. Involved in the gluconeogenesis. Catalyzes stereospecifically the conversion of dihydroxyacetone phosphate (DHAP) to D-glyceraldehyde-3-phosphate (G3P). The chain is Triosephosphate isomerase from Chromohalobacter salexigens (strain ATCC BAA-138 / DSM 3043 / CIP 106854 / NCIMB 13768 / 1H11).